A 572-amino-acid chain; its full sequence is Arginine--tRNA ligase (572 aa).

The 'HIGH' region motif lies at 127 to 137 (ANPTGPLHVGH).

This sequence belongs to the class-I aminoacyl-tRNA synthetase family. In terms of assembly, monomer.

It localises to the cytoplasm. It catalyses the reaction tRNA(Arg) + L-arginine + ATP = L-arginyl-tRNA(Arg) + AMP + diphosphate. The chain is Arginine--tRNA ligase from Vesicomyosocius okutanii subsp. Calyptogena okutanii (strain HA).